The primary structure comprises 244 residues: Cell division protein DivIB (244 aa).

Topologically, residues 1–6 (MKIKWP) are cytoplasmic. A helical transmembrane segment spans residues 7-27 (LQLWISLAVFVTIAVGTLLLL). The region spanning 28-104 (QPWQTIKTVT…IDIAEKVTAG (77 aa)) is the POTRA domain. At 28-244 (QPWQTIKTVT…KADNKAHQKQ (217 aa)) the chain is on the extracellular side.

It belongs to the FtsQ/DivIB family. DivIB subfamily.

It is found in the cell membrane. Its function is as follows. Cell division protein that may be involved in stabilizing or promoting the assembly of the division complex. The sequence is that of Cell division protein DivIB from Leuconostoc kimchii (strain IMSNU 11154 / KCTC 2386 / IH25).